Reading from the N-terminus, the 381-residue chain is Ceropsin (381 aa).

The Extracellular portion of the chain corresponds to 1 to 62 (MSISMDAGPG…MNPLWHALLG (62 aa)). The N-linked (GlcNAc...) asparagine glycan is linked to asparagine 28. The chain crosses the membrane as a helical span at residues 63-83 (FTIGVLGFISMMGNGMVIYIF). At 84–96 (MTTKNLKTPSNLL) the chain is on the cytoplasmic side. A helical transmembrane segment spans residues 97–117 (VVNLAFSDFLMMCAMSPAMVI). At 118–133 (NCYNETWVFGPFACEL) the chain is on the extracellular side. The N-linked (GlcNAc...) asparagine glycan is linked to asparagine 121. Cysteine 131 and cysteine 208 are joined by a disulfide. A helical membrane pass occupies residues 134–154 (YGCAGSLFGCASIWTMTMIAF). Residues 155 to 173 (DRYNVIVKGIAAKPMTNNG) lie on the Cytoplasmic side of the membrane. The chain crosses the membrane as a helical span at residues 174 to 194 (ALLRILGIWAFSLAWTVAPFF). Over 195-221 (GWNRYVPEGNMTACGTDYLTKDWFSRS) the chain is Extracellular. Asparagine 204 carries N-linked (GlcNAc...) asparagine glycosylation. Residues 222–242 (YIVVYSVFVYFAPLLLIVYSY) form a helical membrane-spanning segment. Residues 243–284 (YYIVQAVSAHEKAMREQAKKMNVASLRSSEAANTSTECKLAK) lie on the Cytoplasmic side of the membrane. A helical transmembrane segment spans residues 285-305 (VALMTISLWFMAWTPYLVINY). At 306–316 (TGILESAPISP) the chain is on the extracellular side. A helical membrane pass occupies residues 317 to 339 (LATIWGSLFAKANAVYNPIVYGI). Residues 340-381 (SHPKYQAALYKRFPVLQCHSTTTDEASSVASGTTVMEEKPTA) are Cytoplasmic-facing.

The protein belongs to the G-protein coupled receptor 1 family. Opsin subfamily. In terms of tissue distribution, expressed bilaterally in dorsal and ventral anterior protocerebral cells and bilaterally in the dorsal posterior protocerebral and lateral posterior tritocerebral cells (at protein level). Expressed in the larval brain but not in the subesophageal ganglion or thoracic ganglion.

It localises to the membrane. In terms of biological role, visual pigments are the light-absorbing molecules that mediate vision. They consist of an apoprotein, opsin, covalently linked to cis-retinal. May play a role in photoperiodic photoreception. The protein is Ceropsin of Bombyx mori (Silk moth).